Here is a 445-residue protein sequence, read N- to C-terminus: Rab GDP dissociation inhibitor beta (445 aa).

An N-acetylmethionine modification is found at Met1. Lys112 bears the N6-acetyllysine mark. Ser130 is modified (phosphoserine). N6-acetyllysine is present on Lys269. At Ser382 the chain carries Phosphoserine.

This sequence belongs to the Rab GDI family. As to quaternary structure, interacts with RHOH. Interacts with the GDP-bound inactive forms of RAB3A, RAB3B, RAB3C, RAB5A, RAB5B, RAB5C, RAB8A, RAB8B, RAB10, RAB12, RAB35, and RAB43; binds RAB3D to a lesser extent. Interacts with DZIP1; this interaction negatively regulates the interaction of GDI2 with GDP-bound RAB8A.

Its subcellular location is the cytoplasm. The protein localises to the membrane. It is found in the golgi apparatus. The protein resides in the trans-Golgi network. Its function is as follows. GDP-dissociation inhibitor preventing the GDP to GTP exchange of most Rab proteins. By keeping these small GTPases in their inactive GDP-bound form regulates intracellular membrane trafficking. Negatively regulates protein transport to the cilium and ciliogenesis through the inhibition of RAB8A. This chain is Rab GDP dissociation inhibitor beta (GDI2), found in Sus scrofa (Pig).